A 101-amino-acid chain; its full sequence is Urease subunit beta (101 aa).

The protein belongs to the urease beta subunit family. Heterotrimer of UreA (gamma), UreB (beta) and UreC (alpha) subunits. Three heterotrimers associate to form the active enzyme.

It is found in the cytoplasm. The catalysed reaction is urea + 2 H2O + H(+) = hydrogencarbonate + 2 NH4(+). Its pathway is nitrogen metabolism; urea degradation; CO(2) and NH(3) from urea (urease route): step 1/1. This Rhizobium rhizogenes (strain K84 / ATCC BAA-868) (Agrobacterium radiobacter) protein is Urease subunit beta.